The following is a 460-amino-acid chain: UDP-N-acetylmuramoylalanine--D-glutamate ligase (460 aa).

Position 122–128 (122–128 (GSNGKST)) interacts with ATP.

This sequence belongs to the MurCDEF family.

It is found in the cytoplasm. It carries out the reaction UDP-N-acetyl-alpha-D-muramoyl-L-alanine + D-glutamate + ATP = UDP-N-acetyl-alpha-D-muramoyl-L-alanyl-D-glutamate + ADP + phosphate + H(+). It functions in the pathway cell wall biogenesis; peptidoglycan biosynthesis. Cell wall formation. Catalyzes the addition of glutamate to the nucleotide precursor UDP-N-acetylmuramoyl-L-alanine (UMA). In Jannaschia sp. (strain CCS1), this protein is UDP-N-acetylmuramoylalanine--D-glutamate ligase.